Reading from the N-terminus, the 666-residue chain is DNA mismatch repair protein MutL (666 aa).

It belongs to the DNA mismatch repair MutL/HexB family.

This protein is involved in the repair of mismatches in DNA. It is required for dam-dependent methyl-directed DNA mismatch repair. May act as a 'molecular matchmaker', a protein that promotes the formation of a stable complex between two or more DNA-binding proteins in an ATP-dependent manner without itself being part of a final effector complex. The chain is DNA mismatch repair protein MutL from Clostridium botulinum (strain Langeland / NCTC 10281 / Type F).